The sequence spans 1940 residues: Myosin-2 (1940 aa).

A Myosin N-terminal SH3-like domain is found at Asp-33–Pro-82. A phosphothreonine mark is found at Thr-64 and Thr-69. The 698-residue stretch at Asp-86–Asp-783 folds into the Myosin motor domain. Position 130 is an N6,N6,N6-trimethyllysine (Lys-130). Gly-179 to Thr-186 provides a ligand contact to ATP. Residue Tyr-389 is modified to Phosphotyrosine. Ser-392 carries the phosphoserine modification. Position 419 is a phosphothreonine (Thr-419). The residue at position 625 (Ser-625) is a Phosphoserine. An actin-binding region spans residues Leu-660 to Glu-682. The residue at position 758 (His-758) is a Pros-methylhistidine. Positions Lys-762 to Gly-776 are actin-binding. The 30-residue stretch at Leu-786–Ser-815 folds into the IQ domain. A coiled-coil region spans residues Leu-844–Glu-1940. Phosphoserine occurs at positions 1093, 1097, 1163, and 1238. Positions Arg-1154–Glu-1173 are disordered. Position 1242 is a phosphothreonine (Thr-1242). The residue at position 1244 (Ser-1244) is a Phosphoserine. Phosphothreonine is present on Thr-1256. Ser-1262 is modified (phosphoserine). The residue at position 1287 (Thr-1287) is a Phosphothreonine. A phosphoserine mark is found at Ser-1289, Ser-1293, Ser-1304, and Ser-1307. A Phosphotyrosine modification is found at Tyr-1465. Thr-1468 carries the post-translational modification Phosphothreonine. At Ser-1475 the chain carries Phosphoserine. Position 1493 is a phosphotyrosine (Tyr-1493). The residue at position 1496 (Ser-1496) is a Phosphoserine. Thr-1502 carries the post-translational modification Phosphothreonine. Ser-1515 is subject to Phosphoserine. Thr-1518 carries the post-translational modification Phosphothreonine. A phosphoserine mark is found at Ser-1543, Ser-1555, Ser-1575, Ser-1601, Ser-1715, and Ser-1727. Residues Thr-1731 and Thr-1737 each carry the phosphothreonine modification. Ser-1740 is subject to Phosphoserine. The disordered stretch occupies residues Lys-1884 to Ser-1920.

This sequence belongs to the TRAFAC class myosin-kinesin ATPase superfamily. Myosin family. Muscle myosin is a hexameric protein that consists of 2 heavy chain subunits (MHC), 2 alkali light chain subunits (MLC) and 2 regulatory light chain subunits (MLC-2). Interacts with GCSAM.

The protein localises to the cytoplasm. It localises to the myofibril. Functionally, myosins are actin-based motor molecules with ATPase activity essential for muscle contraction. The polypeptide is Myosin-2 (MYH2) (Canis lupus familiaris (Dog)).